Here is a 288-residue protein sequence, read N- to C-terminus: Bifunctional protein FolD (288 aa).

Residues 164 to 166 (GRS), serine 193, and isoleucine 234 each bind NADP(+).

Belongs to the tetrahydrofolate dehydrogenase/cyclohydrolase family. In terms of assembly, homodimer.

The enzyme catalyses (6R)-5,10-methylene-5,6,7,8-tetrahydrofolate + NADP(+) = (6R)-5,10-methenyltetrahydrofolate + NADPH. The catalysed reaction is (6R)-5,10-methenyltetrahydrofolate + H2O = (6R)-10-formyltetrahydrofolate + H(+). The protein operates within one-carbon metabolism; tetrahydrofolate interconversion. Catalyzes the oxidation of 5,10-methylenetetrahydrofolate to 5,10-methenyltetrahydrofolate and then the hydrolysis of 5,10-methenyltetrahydrofolate to 10-formyltetrahydrofolate. In Nitratidesulfovibrio vulgaris (strain DSM 19637 / Miyazaki F) (Desulfovibrio vulgaris), this protein is Bifunctional protein FolD.